Reading from the N-terminus, the 320-residue chain is Variant surface glycoprotein ILTAT 1.2 (320 aa).

3 N-linked (GlcNAc...) asparagine glycosylation sites follow: N146, N282, and N295. The tract at residues 297 to 320 is disordered; it reads TKATENGVPVAQTQTGGSETTTEK. Positions 308-320 are enriched in low complexity; it reads QTQTGGSETTTEK.

Its subcellular location is the cell membrane. In terms of biological role, VSG forms a coat on the surface of the parasite. The trypanosome evades the immune response of the host by expressing a series of antigenically distinct VSGs from an estimated 1000 VSG genes. The sequence is that of Variant surface glycoprotein ILTAT 1.2 from Trypanosoma brucei brucei.